We begin with the raw amino-acid sequence, 308 residues long: Malonyl CoA-acyl carrier protein transacylase (308 aa).

Residues Ser89 and His199 contribute to the active site.

Belongs to the FabD family.

It carries out the reaction holo-[ACP] + malonyl-CoA = malonyl-[ACP] + CoA. It participates in lipid metabolism; fatty acid biosynthesis. The protein is Malonyl CoA-acyl carrier protein transacylase (fabD) of Staphylococcus aureus (strain MRSA252).